Reading from the N-terminus, the 367-residue chain is Acryloyl-CoA reductase electron transfer subunit beta (367 aa).

Residue 305 to 333 coordinates FAD; sequence VYVALGISGAIQHKAGMQDSELIIAVNKD.

Heterohexadecamer; tetramer of tetramers. Each tetramer is composed of 2 alpha (AcrC), a beta (AcrA) and a gamma (AcrB) subunit.

It is found in the cytoplasm. Part of the ETF-acryloyl-CoA reductase complex involved in the pathway of L-alanine fermentation. The electron transfer flavoprotein (ETF) serves as a specific electron acceptor for acryloyl-CoA reductase. The polypeptide is Acryloyl-CoA reductase electron transfer subunit beta (acrA) (Anaerotignum propionicum (Clostridium propionicum)).